The sequence spans 329 residues: GTP 3',8-cyclase (329 aa).

A Radical SAM core domain is found at 8–234; the sequence is VFARKFYYLR…QLRQRSDGPA (227 aa). A GTP-binding site is contributed by Arg-17. Cys-24 and Cys-28 together coordinate [4Fe-4S] cluster. Position 30 (Tyr-30) interacts with S-adenosyl-L-methionine. [4Fe-4S] cluster is bound at residue Cys-31. Arg-68 contributes to the GTP binding site. Gly-72 serves as a coordination point for S-adenosyl-L-methionine. Thr-99 provides a ligand contact to GTP. Position 123 (Ser-123) interacts with S-adenosyl-L-methionine. Lys-160 serves as a coordination point for GTP. Met-194 contacts S-adenosyl-L-methionine. Residues Cys-257 and Cys-260 each coordinate [4Fe-4S] cluster. GTP is bound at residue 262-264; that stretch reads RLR. Cys-274 lines the [4Fe-4S] cluster pocket.

Belongs to the radical SAM superfamily. MoaA family. As to quaternary structure, monomer and homodimer. Requires [4Fe-4S] cluster as cofactor.

It carries out the reaction GTP + AH2 + S-adenosyl-L-methionine = (8S)-3',8-cyclo-7,8-dihydroguanosine 5'-triphosphate + 5'-deoxyadenosine + L-methionine + A + H(+). It functions in the pathway cofactor biosynthesis; molybdopterin biosynthesis. Functionally, catalyzes the cyclization of GTP to (8S)-3',8-cyclo-7,8-dihydroguanosine 5'-triphosphate. This Shigella flexneri protein is GTP 3',8-cyclase.